Consider the following 199-residue polypeptide: Recombination protein RecR (199 aa).

The segment at 58-73 (CLNCGNIGTSDICDIC) adopts a C4-type zinc-finger fold. Residues 81-176 (GEICVVEDVA…AVTSLAQGVP (96 aa)) form the Toprim domain.

The protein belongs to the RecR family.

May play a role in DNA repair. It seems to be involved in an RecBC-independent recombinational process of DNA repair. It may act with RecF and RecO. The sequence is that of Recombination protein RecR from Dinoroseobacter shibae (strain DSM 16493 / NCIMB 14021 / DFL 12).